Here is a 201-residue protein sequence, read N- to C-terminus: MAEKFIKHTGLVVPLDAANVDTDAIIPKQFLQKVTRTGFGAHLFNDWRFLDEKGQQPNPDFVLNFPQYQGASILLARENFGCGSSREHAPWALTDYGFKVVIAPSFADIFYGNSFNNQLLPVKLSDAEVDELFALVKANPGIHFDVDLEAQEVKAGEKTYRFTIDAFRRHCMMNGLDSIGLTLQHDDAIAAYEAKQPAFMN.

Belongs to the LeuD family. LeuD type 1 subfamily. As to quaternary structure, heterodimer of LeuC and LeuD.

The catalysed reaction is (2R,3S)-3-isopropylmalate = (2S)-2-isopropylmalate. It functions in the pathway amino-acid biosynthesis; L-leucine biosynthesis; L-leucine from 3-methyl-2-oxobutanoate: step 2/4. Functionally, catalyzes the isomerization between 2-isopropylmalate and 3-isopropylmalate, via the formation of 2-isopropylmaleate. The protein is 3-isopropylmalate dehydratase small subunit of Shigella boydii serotype 18 (strain CDC 3083-94 / BS512).